Here is a 363-residue protein sequence, read N- to C-terminus: MMYKHVGDDARGSSAGVVCCVDVVDDDVDALLCGEDAGELEREGEPAQGSSPSSSLSCAAAAAAAADDDDEDEDEHGVHGEVVQVTPGGEEHCYDYDYDVDVPVGAELVMPACSPPRTAVHRPGWSESVSWILKVRSVHGFQPATAYLAVSYMDRFMSSRSLPDHGWASQLLCVACLSLAAKMEESSAPPLLDLQIEGTRFIFEPRTIQRMELIVLVELDWRLRSVTPFAFVDFFACKVGSSGRSSRILALRACQIILSAIHELEFLNHCASSMAAAAVLFAVNESPAAMSHRSSVSSESAASWCIGLTEERISSCYQLLQRALNATARKRKRHPMILAACSSVTSSSSRSKRRKLDGHFGED.

A disordered region spans residues Glu-39–Gly-77. A compositionally biased stretch (low complexity) spans Ser-50 to Ala-65. Positions Ala-66–Glu-75 are enriched in acidic residues.

The protein belongs to the cyclin family. Cyclin D subfamily.

In Oryza sativa subsp. japonica (Rice), this protein is Cyclin-D1-1 (CYCD1-1).